The following is a 381-amino-acid chain: DNA primase DnaG (381 aa).

Residues D173–I259 enclose the Toprim domain. Residues E179, D221, and D223 each coordinate Mg(2+).

The protein belongs to the archaeal DnaG primase family. In terms of assembly, forms a ternary complex with MCM helicase and DNA. Component of the archaeal exosome complex. The cofactor is Mg(2+).

The catalysed reaction is ssDNA + n NTP = ssDNA/pppN(pN)n-1 hybrid + (n-1) diphosphate.. Functionally, RNA polymerase that catalyzes the synthesis of short RNA molecules used as primers for DNA polymerase during DNA replication. Also part of the exosome, which is a complex involved in RNA degradation. Acts as a poly(A)-binding protein that enhances the interaction between heteromeric, adenine-rich transcripts and the exosome. The chain is DNA primase DnaG from Methanothermobacter thermautotrophicus (strain ATCC 29096 / DSM 1053 / JCM 10044 / NBRC 100330 / Delta H) (Methanobacterium thermoautotrophicum).